We begin with the raw amino-acid sequence, 319 residues long: MKGYPFLDKANAPFVDRHVTKAGEIFYPWDGKRIDGFGLIGAPLSKSSISHSGASFAPTVIRKCLHAFSTYSVEEDLDLAQLKLTDLGDITMHVTDIVGSQARIEETMTKLLENEQNWQPIVLGGDHSISFPSIKAFASAKGTIGVIQFDAHHDLRNLEDGGPCNGTPFRSLLETGSLVGEHLVQIGIRDFSNSYPYRKYAEKHGVKVYTMKDVNARGLLTILDEAVAKLKRSVDVIYVSVDMDVLDQAHAPGCPAIGPGGMDSTTLLQGIFHLGKDSLVQGMDIVEVDPTLDFREMTSRAAAHVILNYLKGKCIKSIG.

Mn(2+)-binding residues include H127, D150, H152, D154, D242, and D244.

The protein belongs to the arginase family. Mn(2+) serves as cofactor.

The catalysed reaction is N-formimidoyl-L-glutamate + H2O = formamide + L-glutamate. Its pathway is amino-acid degradation; L-histidine degradation into L-glutamate; L-glutamate from N-formimidoyl-L-glutamate (hydrolase route): step 1/1. Catalyzes the conversion of N-formimidoyl-L-glutamate to L-glutamate and formamide. This Halalkalibacterium halodurans (strain ATCC BAA-125 / DSM 18197 / FERM 7344 / JCM 9153 / C-125) (Bacillus halodurans) protein is Formimidoylglutamase.